The sequence spans 101 residues: A-type ATP synthase subunit K (101 aa).

A run of 3 helical transmembrane segments spans residues 4–24 (ALLISLILPILIGGLVAAAQA), 32–52 (FMGINIGAGLAVGLAAIGAGV), and 75–95 (VLIFVAIGEGIAVYGIIFAVL).

Belongs to the V-ATPase proteolipid subunit family. Has multiple subunits with at least A(3), B(3), C, D, E, F, H, I and proteolipid K(x).

It is found in the cell membrane. Functionally, component of the A-type ATP synthase that produces ATP from ADP in the presence of a proton gradient across the membrane. The chain is A-type ATP synthase subunit K from Sulfolobus acidocaldarius (strain ATCC 33909 / DSM 639 / JCM 8929 / NBRC 15157 / NCIMB 11770).